Here is a 967-residue protein sequence, read N- to C-terminus: MSQNTSYRLPAEQSPAARIDRGEALVLTVDGKQLEAFRGDTVASAMLANGQRACGNSMYLDRPRGIFSAGVEEPNALVTVEARHEQDINESMLAATTVPVTANLSATLLRGLGVLDPSTDPAYYDHVHVHTDVLVVGAGPAGLAAAREASRSGARVLLLDERAEAGGSLRDAAGEQIDGQDAAAWIDATVAELAAAEETTHLQRTTVLGSYDANYVVAVQRRTVHLDGPSGAGVSRERIWHIRANQVVLATGAHERPIVFENNDRPGIMLAGAVRSYLNCYGVRAGSQIVVATTNDSAYPLVADLAASGGVVAVIDARTTVSAAAAEAVGAGVRVITGSVVVDTEANESGELSAVIVAELGEDRELGEPQRFEADVLAVAGGFNPVVHLHSQRQGKLVWDTSIHAFVPDAAVANQHLAGALTGLFDTASALSTGAAVGAAAATAAGFERIAQVPQALPVPAGETRPVWLVPSLNGDQATNYTTHFVDLQRDQTVSDVLRATGAGLESVEHIKRYTSISTANDQGKTSGVAAIGVIAAVLGIENPAEIGTTTFRAPYTPVAFAALAGRTRGELLDPARITPMHSWHLAQGAKFEDVGQWKRAWYFPQDGEDMDAAVYRECAAVRESVGMLDATTLGKIEIRGADAAEFLNRIYTNGYTKLKVGMARYGVMCKADGMVFDDGVTLRLAEDRFLMHTTTGGAAGVLDWLEEWLQTEWPELDVTCTSVTEQLATVAVVGPRSRDVVAKLVTGLDVSNDAFKFMSFQDVTLDSGIEARISRISFSGELAYEIAIPSWHGLRVWEDVYAAGQEFNITPYGTETMHVLRAEKGFIIVGQDTDGTVTPQDAGMEWVVSKLKDFVGKRSFSREDNLREDRKHLVSVLPVDTALRLAEGAALVADGAVETEGCTPMEGWVTSSYNSPALGRTFGLALIKNGRSRIGEVLKTPVNGQLVDVLVSDLVLFDPEGSRRDG.

NAD(+)-binding residues include A141, D160, E161, R162, S168, V207, A420, and T427. The (6R)-5,10-methylene-5,6,7,8-tetrahydrofolate site is built by T694 and E786.

The protein belongs to the GcvT family. In terms of assembly, heterotetramer composed of subunits alpha (SoxA), beta (SoxB), gamma (SoxG) and delta (SoxD). It depends on NAD(+) as a cofactor.

Its subcellular location is the cytoplasm. The enzyme catalyses sarcosine + (6S)-5,6,7,8-tetrahydrofolate + O2 = (6R)-5,10-methylene-5,6,7,8-tetrahydrofolate + glycine + H2O2. The catalysed reaction is sarcosine + O2 + H2O = formaldehyde + glycine + H2O2. In terms of biological role, in the presence of tetrahydrofolate, catalyzes the oxidative demethylation of sarcosine to yield glycine, 5,10-methylenetetrahydrofolate and hydrogen peroxide. In the absence of tetrahydrofolate, catalyzes the oxidative demethylation of sarcosine to yield glycine, formaldehyde and hydrogen peroxide. This chain is Sarcosine oxidase subunit alpha, found in Corynebacterium sp. (strain P-1).